A 482-amino-acid polypeptide reads, in one-letter code: MARTLRYLLCGILALAAGSNAVPAARGSTRAAPAAEPSTSATTYEAEDAILSGTTVDTAQEGYTGSGYVTGFDEASDKITFEVESEATKLYDLSIRIAAIYGDKHTTVVLNGGASSDVSFPAGDTWVDVPAGQVLLNEGANTIEIVSNWGWYLVDSITLTPSAPRPEHQINRSLNNPSADASARALYDYLRSIYGKKILAGQQDLTWADYVTQQTGKTPALVSVDLMDYSPSRVERGTKGTSVEEAITHAERGGIVSALWHWNAPAGLYDTDEHPWWSGFYTDATDFDVAAALSSTDNANYTLLLRDIDAIAVQLKRLRDARVPVLWRPLHEAEGGWFWWGAKGPDPAKQLYALLYDRLVNHHGINNLIWVWNSLSPDWYPGDDTVDILSADVYAQGNGPMSTQYNQLIDLGKDKKMIAAAEVGAAPLPDLLQAYEAHWLWFAVWGDTFINNAEWNSPEVLKTVYTSDYVLTLDEIQGWQDS.

A signal peptide spans 1–21 (MARTLRYLLCGILALAAGSNA). The region spanning 42–160 (TTYEAEDAIL…WYLVDSITLT (119 aa)) is the CBM6 domain. N171 and N300 each carry an N-linked (GlcNAc...) asparagine glycan. The region spanning 181 to 474 (ASARALYDYL…YTSDYVLTLD (294 aa)) is the GH26 domain. E332 (proton donor) is an active-site residue. E422 acts as the Nucleophile in catalysis.

It belongs to the glycosyl hydrolase 26 family.

Its subcellular location is the secreted. Its activity is regulated as follows. The activity is completely impaired by Ag(+), partially inhibited by Zn(2+), and enhanced by Co(2+), Ni(2+) and Cu(2+) by 22.6, 14.5 and 20.8 %, respectively. Ca(2+), Na(+), Mg(2+), Mn(2+), urea and EDTA do not significantly affect the mannanase activity. Its function is as follows. Mannan endo-1,4-beta-mannosidase that exhibits high activity against konjac glucomannan and carob galactomannan, as well as a lower activity toward beta-mannan. Shows no activity against barley beta-glucan, birchwood xylan, and low viscosity carboxymethyl cellulose (CMC). Has the ability to hydrolyze manno-oligosaccharides such as M4 which is degraded slightly to M3 and M1, M5 which is mainly degraded to M4 and M1, and M6 which is mostly hydrolyzed to M4 and M2. Shows no activity toward M2 and M3 manno-oligosaccharides. The sequence is that of Mannan endo-1,4-beta-mannosidase from Thermothelomyces thermophilus (strain ATCC 42464 / BCRC 31852 / DSM 1799) (Sporotrichum thermophile).